A 135-amino-acid polypeptide reads, in one-letter code: ATP synthase epsilon chain (135 aa).

It belongs to the ATPase epsilon chain family. F-type ATPases have 2 components, CF(1) - the catalytic core - and CF(0) - the membrane proton channel. CF(1) has five subunits: alpha(3), beta(3), gamma(1), delta(1), epsilon(1). CF(0) has three main subunits: a, b and c.

It is found in the cell inner membrane. Produces ATP from ADP in the presence of a proton gradient across the membrane. This is ATP synthase epsilon chain from Rhizobium etli (strain CIAT 652).